A 512-amino-acid chain; its full sequence is NAD(P)H-quinone oxidoreductase subunit 2 B, chloroplastic (512 aa).

Transmembrane regions (helical) follow at residues 31–51 (FIFP…IDLT), 57–77 (IPWL…ALLF), 99–119 (IFQF…VEYI), 124–144 (MAIT…MFLC), 149–169 (LITI…LSGY), 183–203 (YLLM…WLYG), 229–249 (ISIA…LAPF), 261–281 (PTPV…ALAT), 295–315 (WHLL…LIAI), 323–343 (MLAY…IVGD), 354–374 (YMLF…LFGL), 395–415 (ALSL…AGFF), 418–438 (LYLF…IGLL), and 484–504 (MIVC…IIAI).

The protein belongs to the complex I subunit 2 family. NDH is composed of at least 16 different subunits, 5 of which are encoded in the nucleus.

Its subcellular location is the plastid. It localises to the chloroplast thylakoid membrane. The catalysed reaction is a plastoquinone + NADH + (n+1) H(+)(in) = a plastoquinol + NAD(+) + n H(+)(out). The enzyme catalyses a plastoquinone + NADPH + (n+1) H(+)(in) = a plastoquinol + NADP(+) + n H(+)(out). NDH shuttles electrons from NAD(P)H:plastoquinone, via FMN and iron-sulfur (Fe-S) centers, to quinones in the photosynthetic chain and possibly in a chloroplast respiratory chain. The immediate electron acceptor for the enzyme in this species is believed to be plastoquinone. Couples the redox reaction to proton translocation, and thus conserves the redox energy in a proton gradient. In Arabidopsis thaliana (Mouse-ear cress), this protein is NAD(P)H-quinone oxidoreductase subunit 2 B, chloroplastic.